A 334-amino-acid chain; its full sequence is MAFNLRNRNFLKLLDFTPREIQYMIDLAIDLKKAKYGGYERKHLTGKNIALIFEKTSTRTRCAFEVAAFDQGAQVSYLGPSGSQIGHKESMKDTARVLGRMYDGIEYRGYGQEIVEELGAYAGVPVWNGLTNEFHPTQILADFMTMLEHGKGKRLDQIKFAYLGDARNNMGNSLMVGAAKMGMDIRLVAPKAFWPEEDLVAKCRLIAEETGARITLTEDVKEGVLGADFLYTDVWVSMGEAKEAWDQRVKLMTPYQVNMDVINATKNPDVKFMHCLPAFHNDETTMGKEVADKYGMKGLEVTEDVFESEHSIVFDEAENRMHTIKAVMVATLGD.

Carbamoyl phosphate contacts are provided by residues 57–60, Q84, R108, and 135–138; these read STRT and HPTQ. L-ornithine contacts are provided by residues N169, D233, and 237–238; that span reads SM. Carbamoyl phosphate is bound by residues 275–276 and R320; that span reads CL.

The protein belongs to the aspartate/ornithine carbamoyltransferase superfamily. OTCase family.

The protein localises to the cytoplasm. The enzyme catalyses carbamoyl phosphate + L-ornithine = L-citrulline + phosphate + H(+). It participates in amino-acid biosynthesis; L-arginine biosynthesis; L-arginine from L-ornithine and carbamoyl phosphate: step 1/3. In terms of biological role, reversibly catalyzes the transfer of the carbamoyl group from carbamoyl phosphate (CP) to the N(epsilon) atom of ornithine (ORN) to produce L-citrulline. This Aeromonas hydrophila subsp. hydrophila (strain ATCC 7966 / DSM 30187 / BCRC 13018 / CCUG 14551 / JCM 1027 / KCTC 2358 / NCIMB 9240 / NCTC 8049) protein is Ornithine carbamoyltransferase.